The primary structure comprises 401 residues: MKILVMNCGSSSLKYQLLDMENNKVLAKGLAERIGINDSLLTHQAEGKEKVKIQRDMKNHKEAIQLVLEVLVDKEIGVIKDMKEIDAVGHRVVHGGEYFTDSVLIDDEVIKKLEDCIDLAPLHNPANIEGIKACQQIMPGVPMVAVFDTAFHQTMPDYAYIYPIPYEYYEKHRIRRYGFHGTSHKYVSMRAAEILGRPIEELKIVTCHLGNGASITAVKNGKSIDTSMGFTPLEGLAMGTRSGSIDPSIVTFLMEKEGLTAHQVVDILNKKSGVYGISGISNDFRDIENAAFNEGNKRAMLALKVFAYIAKKTIGAYAAAMGGVDAIVFTAGVGENGPEMREFILEGLEFLGFTLDKEKNRVRGKEAIISTEDSRVKVMVIPTNEEYMIAKDTEKLVKGIK.

Asn7 is a binding site for Mg(2+). ATP is bound at residue Lys14. Arg91 is a binding site for substrate. The active-site Proton donor/acceptor is Asp148. ATP is bound by residues His208–Gly212, Asp283–Arg285, and Gly332–Asn336. Glu385 is a Mg(2+) binding site.

It belongs to the acetokinase family. In terms of assembly, homodimer. The cofactor is Mg(2+). Requires Mn(2+) as cofactor.

The protein resides in the cytoplasm. The enzyme catalyses acetate + ATP = acetyl phosphate + ADP. It participates in metabolic intermediate biosynthesis; acetyl-CoA biosynthesis; acetyl-CoA from acetate: step 1/2. Catalyzes the formation of acetyl phosphate from acetate and ATP. Can also catalyze the reverse reaction. The polypeptide is Acetate kinase (Caldanaerobacter subterraneus subsp. tengcongensis (strain DSM 15242 / JCM 11007 / NBRC 100824 / MB4) (Thermoanaerobacter tengcongensis)).